A 413-amino-acid polypeptide reads, in one-letter code: Multifunctional CCA protein (413 aa).

2 residues coordinate ATP: G8 and R11. The CTP site is built by G8 and R11. Mg(2+)-binding residues include D21 and D23. ATP is bound by residues R91, R137, and R140. CTP-binding residues include R91, R137, and R140. Positions 228–329 (TGVHTLMTLS…VKLFDAIDAW (102 aa)) constitute an HD domain.

It belongs to the tRNA nucleotidyltransferase/poly(A) polymerase family. Bacterial CCA-adding enzyme type 1 subfamily. Monomer. Can also form homodimers and oligomers. Mg(2+) is required as a cofactor. The cofactor is Ni(2+).

The catalysed reaction is a tRNA precursor + 2 CTP + ATP = a tRNA with a 3' CCA end + 3 diphosphate. It carries out the reaction a tRNA with a 3' CCA end + 2 CTP + ATP = a tRNA with a 3' CCACCA end + 3 diphosphate. Catalyzes the addition and repair of the essential 3'-terminal CCA sequence in tRNAs without using a nucleic acid template. Adds these three nucleotides in the order of C, C, and A to the tRNA nucleotide-73, using CTP and ATP as substrates and producing inorganic pyrophosphate. tRNA 3'-terminal CCA addition is required both for tRNA processing and repair. Also involved in tRNA surveillance by mediating tandem CCA addition to generate a CCACCA at the 3' terminus of unstable tRNAs. While stable tRNAs receive only 3'-terminal CCA, unstable tRNAs are marked with CCACCA and rapidly degraded. The chain is Multifunctional CCA protein from Salmonella schwarzengrund (strain CVM19633).